Reading from the N-terminus, the 2144-residue chain is Alpha-protein kinase 2 (2144 aa).

An Ig-like 1 domain is found at 7-105; the sequence is PERRTLCFLS…ICCSASLEVQ (99 aa). The cysteines at positions 33 and 98 are disulfide-linked. 11 disordered regions span residues 425-473, 500-575, 727-775, 845-864, 881-907, 1011-1065, 1316-1340, 1471-1509, 1565-1587, 1629-1696, and 1720-1754; these read ETAK…LQTM, SLAR…GAPG, EDNE…NVGS, QTQGSEPPRSTDKRSQDGKS, EASEDAVGETAADVENPPSTFSSTLPY, SCEA…PEGQ, DPVEDKELEVTDSPSEVSKTGEMEM, GPGEEGQGIPSVCSMSQTQDGGDRSLGEAGQRGTDETEV, CGNHVRSSDDLTNTPCTSSPKGN, ECES…GSGH, and ENSRKNSIVKKTPKFERSLSRTDEKRDPKRAPCKA. Residues 500-511 are compositionally biased toward basic and acidic residues; that stretch reads SLARERTDEKYP. A compositionally biased stretch (basic and acidic residues) spans 853-864; that stretch reads RSTDKRSQDGKS. Over residues 897–906 the composition is skewed to polar residues; sequence PPSTFSSTLP. The span at 1574-1587 shows a compositional bias: polar residues; it reads DLTNTPCTSSPKGN. 2 stretches are compositionally biased toward basic and acidic residues: residues 1631 to 1645 and 1732 to 1754; these read ESEKDPKSLLRRDPC and PKFERSLSRTDEKRDPKRAPCKA. The Ig-like 2 domain occupies 1759–1847; sequence PVLLKRIQAE…GKVTAEFNLT (89 aa). Cys1781 and Cys1831 are joined by a disulfide. The region spanning 1874–2106 is the Alpha-type protein kinase domain; that stretch reads KEDVFNDSYF…YCKMLGLKSL (233 aa). Residues 2109–2144 are disordered; that stretch reads NSQKPKKPIVGKGRVPTNATQVKTPESETPPAERKT.

Belongs to the protein kinase superfamily. Alpha-type protein kinase family. ALPK subfamily.

It localises to the basolateral cell membrane. It catalyses the reaction L-seryl-[protein] + ATP = O-phospho-L-seryl-[protein] + ADP + H(+). It carries out the reaction L-threonyl-[protein] + ATP = O-phospho-L-threonyl-[protein] + ADP + H(+). Functionally, protein kinase that recognizes phosphorylation sites in which the surrounding peptides have an alpha-helical conformation. Regulates cardiac development and cardiomyocyte differentiation by negatively regulating Wnt/beta-catenin signaling. This chain is Alpha-protein kinase 2, found in Mus musculus (Mouse).